The following is a 581-amino-acid chain: Transcription activator GAGA (581 aa).

Residues 34-99 form the BTB domain; that stretch reads VDCTLAAGGR…VYRGEVSVDH (66 aa). Positions 201-397 are interaction with E(bx); that stretch reads VIQAFLPARK…SSGSGSGALS (197 aa). T237 bears the Phosphothreonine mark. Disordered regions lie at residues 298-343 and 364-404; these read ITPA…EQPA and LRHF…SVPQ. The segment at 343-366 adopts a C2H2-type; degenerate zinc-finger fold; the sequence is ATCPICYAVIRQSRNLRRHLELRH. Residues 381-401 show a composition bias toward low complexity; the sequence is GKKSSSGSSGSGSGALSSSGS.

As to quaternary structure, interacts with Bin1, lolal, corto, ttk and ph-p. Interacts with FACT subunits Ssrp and dre4/SPT16. Interacts with E(bx). Upon ecdysone stimulation, interacts with Nup98. The N-terminus is blocked. As to expression, expressed in the central nervous system throughout development.

The protein localises to the nucleus. It is found in the chromosome. Its function is as follows. Transcriptional activator that functions by regulating chromatin structure. Overcomes the repressive effects of chromatin by promoting the open chromatin conformation in promoter gene regions, thereby allowing access to other transcription factors. Binds to DNA Polycomb response elements (PREs) at the bithorax complex and to the proximal region of the engrailed promoter, and positively regulates transcription of many genes including homeotic ones. Involved in zygotic genome activation (ZGA), a critical event in early embryonic development during which the developmental control passes from maternally provided mRNAs to the expression of the zygotic genome after fertilization. Binds to the DNA sequence (GA)n, with optimal binding to the pentamer 5'-GAGAG-3'. Binds DNA as an oligomer. May also act as a transcriptional repressor, maintaining the repressed state of genes including lolal, and down-regulating its own transcription. Required for dosage compensation in males and may be involved in oogenesis. Also has a role in nuclear division. In Drosophila melanogaster (Fruit fly), this protein is Transcription activator GAGA (Trl).